Consider the following 190-residue polypeptide: Large ribosomal subunit protein uL6 (190 aa).

Belongs to the universal ribosomal protein uL6 family.

The sequence is that of Large ribosomal subunit protein uL6 (RpL9) from Drosophila melanogaster (Fruit fly).